Consider the following 74-residue polypeptide: Translational regulator CsrA (74 aa).

Belongs to the CsrA/RsmA family. In terms of assembly, homodimer; the beta-strands of each monomer intercalate to form a hydrophobic core, while the alpha-helices form wings that extend away from the core.

The protein localises to the cytoplasm. Functionally, a translational regulator that binds mRNA to regulate translation initiation and/or mRNA stability. Usually binds in the 5'-UTR at or near the Shine-Dalgarno sequence preventing ribosome-binding, thus repressing translation. Its main target seems to be the major flagellin gene, while its function is anatagonized by FliW. In Bacillus velezensis (strain DSM 23117 / BGSC 10A6 / LMG 26770 / FZB42) (Bacillus amyloliquefaciens subsp. plantarum), this protein is Translational regulator CsrA.